A 122-amino-acid polypeptide reads, in one-letter code: Large ribosomal subunit protein uL14 (122 aa).

This sequence belongs to the universal ribosomal protein uL14 family. In terms of assembly, part of the 50S ribosomal subunit. Forms a cluster with proteins L3 and L19. In the 70S ribosome, L14 and L19 interact and together make contacts with the 16S rRNA in bridges B5 and B8.

Its function is as follows. Binds to 23S rRNA. Forms part of two intersubunit bridges in the 70S ribosome. This Streptomyces avermitilis (strain ATCC 31267 / DSM 46492 / JCM 5070 / NBRC 14893 / NCIMB 12804 / NRRL 8165 / MA-4680) protein is Large ribosomal subunit protein uL14.